The following is a 190-amino-acid chain: Putative 3-methyladenine DNA glycosylase (190 aa).

It belongs to the DNA glycosylase MPG family.

This is Putative 3-methyladenine DNA glycosylase from Corynebacterium efficiens (strain DSM 44549 / YS-314 / AJ 12310 / JCM 11189 / NBRC 100395).